The primary structure comprises 455 residues: L-serine dehydratase (455 aa).

Belongs to the iron-sulfur dependent L-serine dehydratase family. [4Fe-4S] cluster serves as cofactor.

The catalysed reaction is L-serine = pyruvate + NH4(+). The protein operates within carbohydrate biosynthesis; gluconeogenesis. The sequence is that of L-serine dehydratase (sdaA) from Helicobacter pylori (strain J99 / ATCC 700824) (Campylobacter pylori J99).